The primary structure comprises 434 residues: Rubisco accumulation factor 1.1, chloroplastic (434 aa).

A chloroplast-targeting transit peptide spans 1–51 (MLSLTATTLSSSIFTQSKTHGFFNTRPVYRKPFTTITSALIPASNRQAPPK). The tract at residues 65-254 (IPPKFRSLDT…KAKKAVLREL (190 aa)) is N-terminal alpha-helix. The segment at 273–419 (VPVVRLRFGE…GMVVLVVRPP (147 aa)) is C-terminal beta sheet.

This sequence belongs to the RAF family. As to quaternary structure, homodimer.

The protein resides in the plastid. It localises to the chloroplast. Functionally, required for assembly or stability of RuBisCO. Acts at a postchaperonin step to fold and/or assemble the large subunit (rbcL) into RuBisCO. RAF1 binds first to a rbcL dimer (rbcL(2)), leading to a rbcL(8)-RAF1(4) complex formation. In the next step, RBCS displaces RAF1, thus resulting in holoenzyme formation. The polypeptide is Rubisco accumulation factor 1.1, chloroplastic (Arabidopsis thaliana (Mouse-ear cress)).